Here is a 784-residue protein sequence, read N- to C-terminus: PWWP domain-containing protein 2A (784 aa).

Low complexity predominate over residues 1-10; it reads MAAVAAAPGP. 4 disordered regions span residues 1 to 29, 399 to 443, 468 to 570, and 609 to 655; these read MAAV…EWRL, DHKV…KTQL, EKAQ…EIQD, and SSAS…SKEE. Residues 399–412 show a composition bias toward basic and acidic residues; it reads DHKVNGKGQHESQK. Polar residues predominate over residues 433–442; the sequence is PSQTSAAKTQ. The 61-residue stretch at 684–744 folds into the PWWP domain; that stretch reads VGDIVWAKIY…LSQLAPFLEN (61 aa).

The protein localises to the nucleus. Functionally, H2A.Z-specific chromatin binding protein which plays an important role in the neural crest cell differentiation and/or migration during early development and is essential for the development of the head and eye. Acts as an adapter between distinct nucleosome components (H3K36me3 or H2A.Z) and chromatin-modifying complexes, contributing to the regulation of the levels of histone acetylation at actively transcribed genes. This Xenopus laevis (African clawed frog) protein is PWWP domain-containing protein 2A (pwwp2a).